The following is a 99-amino-acid chain: Cytochrome c2 iso-1 (99 aa).

Positions 10, 13, 14, and 75 each coordinate heme c.

This sequence belongs to the cytochrome c family. In terms of processing, binds 1 heme c group covalently per subunit.

Functionally, cytochrome c2 is found mainly in purple, non-sulfur, photosynthetic bacteria where it functions as the electron donor to the oxidized bacteriochlorophyll in the photophosphorylation pathway. However, it may also have a role in the respiratory chain and is found in some non-photosynthetic bacteria. The protein is Cytochrome c2 iso-1 of Magnetospirillum fulvum (Rhodospirillum fulvum).